The following is a 1575-amino-acid chain: Ovochymase (1575 aa).

Positions 1–19 (MIVTFVALALSCCTPQVTA) are cleaved as a signal peptide. A Peptidase S1 1 domain is found at 36 to 280 (IVGGEMAKLG…YSSWIANYTQ (245 aa)). A disulfide bridge links C61 with C77. Active-site charge relay system residues include H76 and D132. Disulfide bonds link C166–C233, C199–C212, and C223–C256. S227 functions as the Charge relay system in the catalytic mechanism. N-linked (GlcNAc...) asparagine glycans are attached at residues N277 and N303. 4 cysteine pairs are disulfide-bonded: C300-C330, C358-C386, C432-C460, and C486-C507. CUB domains lie at 300 to 423 (CSSN…FHAV) and 432 to 545 (CGGI…YYFS). N-linked (GlcNAc...) asparagine glycans are attached at residues N497, N513, and N549. One can recognise a Peptidase S1 2 domain in the interval 575–810 (IVNGDIAIAG…YIDWIIATAN (236 aa)). Residues C602 and C618 are joined by a disulfide bond. Active-site charge relay system residues include H617 and D665. 3 cysteine pairs are disulfide-bonded: C700-C766, C730-C745, and C756-C786. The N-linked (GlcNAc...) asparagine glycan is linked to N748. The active-site Charge relay system is S760. A glycan (N-linked (GlcNAc...) asparagine) is linked at N810. 7 disulfides stabilise this stretch: C830-C859, C889-C913, C956-C984, C1012-C1034, C1080-C1108, C1135-C1158, and C1221-C1246. CUB domains are found at residues 830–949 (CIQL…YRLE), 956–1070 (CGQL…FVEL), 1080–1197 (CGGV…YTAV), and 1221–1341 (CQDS…YKLM). 4 N-linked (GlcNAc...) asparagine glycosylation sites follow: N968, N1027, N1087, and N1090. N1273 is a glycosylation site (N-linked (GlcNAc...) asparagine). The 262-residue stretch at 1314–1575 (YNGGEISMLF…FLKWITKIIQ (262 aa)) folds into the Peptidase S1 3 domain. 2 disulfides stabilise this stretch: C1376/C1392 and C1493/C1507. N-linked (GlcNAc...) asparagine glycosylation occurs at N1511.

It belongs to the peptidase S1 family. Expressed in the testis and ovary. Expressed in the gonads and gametes. Expressed in the follicle cells covering the vitelline coat of ovarian egg.

The protein resides in the secreted. Functionally, may be responsible for elevation of the vitelline coat at the late developmental stage of oogenesis and during fertilization in ovarian eggs. The protein is Ovochymase of Halocynthia roretzi (Sea squirt).